A 71-amino-acid chain; its full sequence is DNA-directed RNA polymerase subunit omega (71 aa).

Belongs to the RNA polymerase subunit omega family. In terms of assembly, the RNAP catalytic core consists of 2 alpha, 1 beta, 1 beta' and 1 omega subunit. When a sigma factor is associated with the core the holoenzyme is formed, which can initiate transcription.

It carries out the reaction RNA(n) + a ribonucleoside 5'-triphosphate = RNA(n+1) + diphosphate. Its function is as follows. Promotes RNA polymerase assembly. Latches the N- and C-terminal regions of the beta' subunit thereby facilitating its interaction with the beta and alpha subunits. This chain is DNA-directed RNA polymerase subunit omega, found in Aromatoleum aromaticum (strain DSM 19018 / LMG 30748 / EbN1) (Azoarcus sp. (strain EbN1)).